Reading from the N-terminus, the 257-residue chain is Ribonuclease HII (257 aa).

The RNase H type-2 domain occupies 71 to 257 (ELIAGIDEVG…EPIKSMVNFK (187 aa)). A divalent metal cation-binding residues include D77, E78, and D169.

This sequence belongs to the RNase HII family. Requires Mn(2+) as cofactor. Mg(2+) serves as cofactor.

It is found in the cytoplasm. The catalysed reaction is Endonucleolytic cleavage to 5'-phosphomonoester.. Endonuclease that specifically degrades the RNA of RNA-DNA hybrids. This Lactococcus lactis subsp. cremoris (strain MG1363) protein is Ribonuclease HII (rnhB).